Reading from the N-terminus, the 449-residue chain is Tol-Pal system protein TolB (449 aa).

The N-terminal stretch at 1 to 36 is a signal peptide; it reads MDCPNMPLHINRRQMLLSAATAAGALALGPARDAFG.

Belongs to the TolB family. The Tol-Pal system is composed of five core proteins: the inner membrane proteins TolA, TolQ and TolR, the periplasmic protein TolB and the outer membrane protein Pal. They form a network linking the inner and outer membranes and the peptidoglycan layer.

The protein resides in the periplasm. Functionally, part of the Tol-Pal system, which plays a role in outer membrane invagination during cell division and is important for maintaining outer membrane integrity. In Rhodopseudomonas palustris (strain HaA2), this protein is Tol-Pal system protein TolB.